We begin with the raw amino-acid sequence, 118 residues long: Large ribosomal subunit protein uL18 (118 aa).

This sequence belongs to the universal ribosomal protein uL18 family. In terms of assembly, part of the 50S ribosomal subunit; part of the 5S rRNA/L5/L18/L25 subcomplex. Contacts the 5S and 23S rRNAs.

This is one of the proteins that bind and probably mediate the attachment of the 5S RNA into the large ribosomal subunit, where it forms part of the central protuberance. The polypeptide is Large ribosomal subunit protein uL18 (Campylobacter jejuni subsp. jejuni serotype O:2 (strain ATCC 700819 / NCTC 11168)).